We begin with the raw amino-acid sequence, 521 residues long: Exoglucanase 1 (521 aa).

A signal peptide spans 1–17; the sequence is MLAKFAALAALVASANA. The interval 18–450 is catalytic; sequence QAVCSLTAET…FGPIGSTFSG (433 aa). N-linked (GlcNAc...) asparagine glycosylation occurs at Asn-32. Glu-229 acts as the Nucleophile in catalysis. Catalysis depends on Glu-234, which acts as the Proton donor. Residue Asn-287 is glycosylated (N-linked (GlcNAc...) asparagine). The tract at residues 447-486 is disordered; that stretch reads TFSGGSSGTPPSNPSSSVKPVTSTAKPSSTSTASNPSGTG. Residues 451-485 form a linker region; it reads GSSGTPPSNPSSSVKPVTSTAKPSSTSTASNPSGT. The 37-residue stretch at 485 to 521 folds into the CBM1 domain; the sequence is TGAAHWAQCGGIGFSGPTTCQSPYTCQKINDYYSQCV. Intrachain disulfides connect Cys-493–Cys-510 and Cys-504–Cys-520.

Belongs to the glycosyl hydrolase 7 (cellulase C) family.

Its subcellular location is the secreted. It carries out the reaction Hydrolysis of (1-&gt;4)-beta-D-glucosidic linkages in cellulose and cellotetraose, releasing cellobiose from the non-reducing ends of the chains.. In Neurospora crassa (strain ATCC 24698 / 74-OR23-1A / CBS 708.71 / DSM 1257 / FGSC 987), this protein is Exoglucanase 1 (cbh-1).